The sequence spans 523 residues: Lysine-specific demethylase 4D (523 aa).

Residues 18-60 form the JmjN domain; the sequence is IMIFHPTKEEFNDFDKYIAYMESQGAHRAGLAKIIPPKEWKAR. 2 positions are modified to polyADP-ribosyl glutamic acid: glutamate 26 and glutamate 27. Tyrosine 136 lines the 2-oxoglutarate pocket. Positions 146 to 312 constitute a JmjC domain; it reads DENTKQWNLG…YGKMASQCSC (167 aa). 2 residues coordinate Fe cation: histidine 192 and glutamate 194. Residues asparagine 202 and lysine 210 each contribute to the 2-oxoglutarate site. Residues cysteine 238 and histidine 244 each coordinate Zn(2+). Lysine 245 serves as a coordination point for 2-oxoglutarate. Residue histidine 280 participates in Fe cation binding. Residues cysteine 310 and cysteine 312 each contribute to the Zn(2+) site. Residues 407–523 are disordered; sequence RRSAVSGTAT…ASGCSWAPVP (117 aa). Positions 428-440 are enriched in low complexity; that stretch reads KPSSTPSSTPGPS. Residues 448-458 show a composition bias toward basic residues; it reads NGRRGRGRPPQ.

It belongs to the JHDM3 histone demethylase family. Fe(2+) serves as cofactor. In terms of processing, ubiquitinated via 'Lys-63'-linked ubiquitin chains. Deubiquitinated by USP14 with the help of TRIM14 leading to stabilization.

It is found in the nucleus. It catalyses the reaction N(6),N(6),N(6)-trimethyl-L-lysyl(9)-[histone H3] + 2 2-oxoglutarate + 2 O2 = N(6)-methyl-L-lysyl(9)-[histone H3] + 2 formaldehyde + 2 succinate + 2 CO2. Functionally, histone demethylase that specifically demethylates 'Lys-9' of histone H3, thereby playing a central role in histone code. Does not demethylate histone H3 'Lys-4', H3 'Lys-27', H3 'Lys-36' nor H4 'Lys-20'. Demethylates both di- and trimethylated H3 'Lys-9' residue, while it has no activity on monomethylated residues. Demethylation of Lys residue generates formaldehyde and succinate. The protein is Lysine-specific demethylase 4D (KDM4D) of Homo sapiens (Human).